The sequence spans 221 residues: Orotate phosphoribosyltransferase (221 aa).

Residue Lys-26 coordinates 5-phospho-alpha-D-ribose 1-diphosphate. Residue 34-35 (FF) coordinates orotate. 5-phospho-alpha-D-ribose 1-diphosphate contacts are provided by residues 72–73 (YK), Arg-98, Lys-99, Lys-102, His-104, and 123–131 (DDVISAGTS). Positions 127 and 155 each coordinate orotate.

It belongs to the purine/pyrimidine phosphoribosyltransferase family. PyrE subfamily. As to quaternary structure, homodimer. Requires Mg(2+) as cofactor.

It catalyses the reaction orotidine 5'-phosphate + diphosphate = orotate + 5-phospho-alpha-D-ribose 1-diphosphate. It functions in the pathway pyrimidine metabolism; UMP biosynthesis via de novo pathway; UMP from orotate: step 1/2. Functionally, catalyzes the transfer of a ribosyl phosphate group from 5-phosphoribose 1-diphosphate to orotate, leading to the formation of orotidine monophosphate (OMP). In Herminiimonas arsenicoxydans, this protein is Orotate phosphoribosyltransferase.